Reading from the N-terminus, the 1213-residue chain is DNA-directed RNA polymerase subunit beta (1213 aa).

Residues 1169–1213 are disordered; the sequence is SRMAEEQEKKKLAEETGKSGDKKENKKDADKPVAPADESDDKVSK. Residues 1171–1199 are compositionally biased toward basic and acidic residues; it reads MAEEQEKKKLAEETGKSGDKKENKKDADK.

The protein belongs to the RNA polymerase beta chain family. As to quaternary structure, the RNAP catalytic core consists of 2 alpha, 1 beta, 1 beta' and 1 omega subunit. When a sigma factor is associated with the core the holoenzyme is formed, which can initiate transcription.

The catalysed reaction is RNA(n) + a ribonucleoside 5'-triphosphate = RNA(n+1) + diphosphate. In terms of biological role, DNA-dependent RNA polymerase catalyzes the transcription of DNA into RNA using the four ribonucleoside triphosphates as substrates. The chain is DNA-directed RNA polymerase subunit beta from Lactobacillus helveticus (strain DPC 4571).